We begin with the raw amino-acid sequence, 128 residues long: KHDC1-like protein (128 aa).

It belongs to the KHDC1 family.

This chain is KHDC1-like protein (KHDC1L), found in Homo sapiens (Human).